The primary structure comprises 472 residues: Tryptophanase (472 aa).

N6-(pyridoxal phosphate)lysine is present on Lys270.

This sequence belongs to the beta-eliminating lyase family. In terms of assembly, homotetramer. Requires pyridoxal 5'-phosphate as cofactor.

The enzyme catalyses L-tryptophan + H2O = indole + pyruvate + NH4(+). The protein operates within amino-acid degradation; L-tryptophan degradation via pyruvate pathway; indole and pyruvate from L-tryptophan: step 1/1. In Haemophilus influenzae (strain 86-028NP), this protein is Tryptophanase.